The chain runs to 393 residues: NAD(P)H-quinone oxidoreductase subunit H, chloroplastic (393 aa).

It belongs to the complex I 49 kDa subunit family. NDH is composed of at least 16 different subunits, 5 of which are encoded in the nucleus.

It is found in the plastid. The protein localises to the chloroplast thylakoid membrane. It catalyses the reaction a plastoquinone + NADH + (n+1) H(+)(in) = a plastoquinol + NAD(+) + n H(+)(out). The catalysed reaction is a plastoquinone + NADPH + (n+1) H(+)(in) = a plastoquinol + NADP(+) + n H(+)(out). Functionally, NDH shuttles electrons from NAD(P)H:plastoquinone, via FMN and iron-sulfur (Fe-S) centers, to quinones in the photosynthetic chain and possibly in a chloroplast respiratory chain. The immediate electron acceptor for the enzyme in this species is believed to be plastoquinone. Couples the redox reaction to proton translocation, and thus conserves the redox energy in a proton gradient. The polypeptide is NAD(P)H-quinone oxidoreductase subunit H, chloroplastic (Psilotum nudum (Whisk fern)).